The chain runs to 1198 residues: DNA polymerase (1198 aa).

3 disordered regions span residues 1–90 (MALV…TVVA), 179–198 (LEQP…QPNP), and 906–931 (ALAD…PSGT). Over residues 30-40 (QQPPRAAPAPA) the composition is skewed to low complexity.

It belongs to the DNA polymerase type-B family. Heterodimer with the terminal protein; this heterodimer binds to bp 9 to 18 of the genome. Forms a complex with viral pTP, DBP and hosts NFIA and POU2F1/OCT1 for initiation of replication.

The protein localises to the host nucleus. The catalysed reaction is DNA(n) + a 2'-deoxyribonucleoside 5'-triphosphate = DNA(n+1) + diphosphate. In terms of biological role, eukaryotic-type DNA polymerase involved in viral genomic replication. DNA synthesis is protein primed, and acts in a strand displacement replication. Assembles in complex with viral pTP, DBP, host NFIA and host POU2F1/OCT1 on viral origin of replication. The polymerase covalently transfers dCMP onto pTP, thereby initiating complementary strand synthesis. This Homo sapiens (Human) protein is DNA polymerase.